A 387-amino-acid polypeptide reads, in one-letter code: Cytochrome b (387 aa).

4 helical membrane-spanning segments follow: residues 32–52 (FGSL…TLAM), 76–98 (WLVR…LHIG), 113–133 (VWAI…LGYV), and 179–199 (FFAL…MHLI). Residues histidine 82 and histidine 96 each contribute to the heme b site. Residues histidine 183 and histidine 197 each contribute to the heme b site. Histidine 202 serves as a coordination point for a ubiquinone. 4 helical membrane passes run 226-246 (YLFK…SFVF), 290-310 (LLGV…PITD), 322-342 (LSKF…KLGA), and 349-369 (FIEL…IIVP).

It belongs to the cytochrome b family. Fungal cytochrome b-c1 complex contains 10 subunits; 3 respiratory subunits, 2 core proteins and 5 low-molecular weight proteins. Cytochrome b-c1 complex is a homodimer. Heme b is required as a cofactor.

The protein localises to the mitochondrion inner membrane. Its function is as follows. Component of the ubiquinol-cytochrome c reductase complex (complex III or cytochrome b-c1 complex) that is part of the mitochondrial respiratory chain. The b-c1 complex mediates electron transfer from ubiquinol to cytochrome c. Contributes to the generation of a proton gradient across the mitochondrial membrane that is then used for ATP synthesis. The protein is Cytochrome b (COB) of Podospora anserina (strain S / ATCC MYA-4624 / DSM 980 / FGSC 10383) (Pleurage anserina).